We begin with the raw amino-acid sequence, 253 residues long: 5-oxoprolinase subunit A (253 aa).

The protein belongs to the LamB/PxpA family. In terms of assembly, forms a complex composed of PxpA, PxpB and PxpC.

It catalyses the reaction 5-oxo-L-proline + ATP + 2 H2O = L-glutamate + ADP + phosphate + H(+). Functionally, catalyzes the cleavage of 5-oxoproline to form L-glutamate coupled to the hydrolysis of ATP to ADP and inorganic phosphate. This chain is 5-oxoprolinase subunit A, found in Ruegeria pomeroyi (strain ATCC 700808 / DSM 15171 / DSS-3) (Silicibacter pomeroyi).